The sequence spans 484 residues: Aspartyl/glutamyl-tRNA(Asn/Gln) amidotransferase subunit B (484 aa).

The protein belongs to the GatB/GatE family. GatB subfamily. Heterotrimer of A, B and C subunits.

The enzyme catalyses L-glutamyl-tRNA(Gln) + L-glutamine + ATP + H2O = L-glutaminyl-tRNA(Gln) + L-glutamate + ADP + phosphate + H(+). It carries out the reaction L-aspartyl-tRNA(Asn) + L-glutamine + ATP + H2O = L-asparaginyl-tRNA(Asn) + L-glutamate + ADP + phosphate + 2 H(+). In terms of biological role, allows the formation of correctly charged Asn-tRNA(Asn) or Gln-tRNA(Gln) through the transamidation of misacylated Asp-tRNA(Asn) or Glu-tRNA(Gln) in organisms which lack either or both of asparaginyl-tRNA or glutaminyl-tRNA synthetases. The reaction takes place in the presence of glutamine and ATP through an activated phospho-Asp-tRNA(Asn) or phospho-Glu-tRNA(Gln). The chain is Aspartyl/glutamyl-tRNA(Asn/Gln) amidotransferase subunit B from Anaeromyxobacter sp. (strain K).